The primary structure comprises 304 residues: Ribosomal RNA small subunit methyltransferase H (304 aa).

Residues 36 to 38 (GGH), Asp53, Phe79, Asp98, and Gln105 contribute to the S-adenosyl-L-methionine site.

It belongs to the methyltransferase superfamily. RsmH family.

It is found in the cytoplasm. The catalysed reaction is cytidine(1402) in 16S rRNA + S-adenosyl-L-methionine = N(4)-methylcytidine(1402) in 16S rRNA + S-adenosyl-L-homocysteine + H(+). Specifically methylates the N4 position of cytidine in position 1402 (C1402) of 16S rRNA. The sequence is that of Ribosomal RNA small subunit methyltransferase H from Myxococcus xanthus (strain DK1622).